The primary structure comprises 155 residues: Endoribonuclease YbeY (155 aa).

Zn(2+) contacts are provided by His117, His121, and His127.

This sequence belongs to the endoribonuclease YbeY family. Zn(2+) is required as a cofactor.

Its subcellular location is the cytoplasm. Functionally, single strand-specific metallo-endoribonuclease involved in late-stage 70S ribosome quality control and in maturation of the 3' terminus of the 16S rRNA. In Psychrobacter cryohalolentis (strain ATCC BAA-1226 / DSM 17306 / VKM B-2378 / K5), this protein is Endoribonuclease YbeY.